Reading from the N-terminus, the 556-residue chain is MIVFKNTKIIDVYTGEVVKGNVAVERDKISFVDLNDEIDKIIEKIKEDVKVIDLKGKYLSPTFIDGHIHIESSHLIPSEFEKFVLKSGVSKVVIDPHEIANIAGKEGILFMLNDAKILDVYVMLPSCVPATNLETSGAEITAENIEELILLDNVLGLGEVMNYPAVINEDEEMLKKIEVAKKYNKLIDGHCPKLKGWELNKYISHGIMSDHESVDEDEALEKLRLGLKLMIREGTASKNIYLLNICKKIKDFRNIMLVSDDVCIKDLDGYMLNILRKATNYVSPIEAIQMVTINPANYFGFDVGIKAGNEASFVIFEDLDNFKVYNIVIKGRFLDDVLNELNKNKKRKIPEKLMNTLKYQYKNEGDFLIKGIDYKERDGFIRVIKPLKDSLITEELIFSTEEIKILLNENAINKIFVIERHKNTGNIGKGLIYNFLEEGALASSYAHDSHNVIAIGNNEKDLALAVNKLKDIGGGFIAAKDGEVVEYLPLPVGGIMGDDGKYIAEKINALYKKIEGWSSFENPFLSMSFFSLPVIPELKITDKGLVKDMQLVDLFI.

It belongs to the metallo-dependent hydrolases superfamily. Adenine deaminase family. Mn(2+) is required as a cofactor.

It catalyses the reaction adenine + H2O + H(+) = hypoxanthine + NH4(+). The sequence is that of Adenine deaminase from Methanocaldococcus jannaschii (strain ATCC 43067 / DSM 2661 / JAL-1 / JCM 10045 / NBRC 100440) (Methanococcus jannaschii).